The sequence spans 76 residues: Gallerimycin (76 aa).

Residues 1–19 form the signal peptide; that stretch reads MKIAFIVAISLAFLAVTSC.

Belongs to the invertebrate defensin family.

In terms of biological role, has antifungal activity against the entomopathogenic fungus M.nisopliae, but does not display any antifungal activity against S.cerevisiae nor any antimicrobial activity against M.luteus, B.subtilis, and E.coli. The chain is Gallerimycin (LOC113523440) from Galleria mellonella (Greater wax moth).